Here is a 333-residue protein sequence, read N- to C-terminus: Flap endonuclease 1 (333 aa).

The tract at residues 1–99 is N-domain; that stretch reads MGVALRDILA…ETNAERKKLR (99 aa). Mg(2+)-binding residues include D28, D81, E153, E155, D174, D176, and D235. Residues 117-256 are I-domain; it reads EAYRQARSAT…TALKIVKSGG (140 aa). The interaction with PCNA stretch occupies residues 325-333; sequence GQKTLESFF.

Belongs to the XPG/RAD2 endonuclease family. FEN1 subfamily. Interacts with PCNA. PCNA stimulates the nuclease activity without altering cleavage specificity. Requires Mg(2+) as cofactor.

Structure-specific nuclease with 5'-flap endonuclease and 5'-3' exonuclease activities involved in DNA replication and repair. During DNA replication, cleaves the 5'-overhanging flap structure that is generated by displacement synthesis when DNA polymerase encounters the 5'-end of a downstream Okazaki fragment. Binds the unpaired 3'-DNA end and kinks the DNA to facilitate 5' cleavage specificity. Cleaves one nucleotide into the double-stranded DNA from the junction in flap DNA, leaving a nick for ligation. Also involved in the base excision repair (BER) pathway. Acts as a genome stabilization factor that prevents flaps from equilibrating into structures that lead to duplications and deletions. Also possesses 5'-3' exonuclease activity on nicked or gapped double-stranded DNA. This is Flap endonuclease 1 from Methanoregula boonei (strain DSM 21154 / JCM 14090 / 6A8).